The chain runs to 331 residues: tRNA N6-adenosine threonylcarbamoyltransferase (331 aa).

Positions 108 and 112 each coordinate Fe cation. Substrate contacts are provided by residues Leu129–Gly133, Asp161, Glu178, and Ser258. Asp286 is a binding site for Fe cation.

It belongs to the KAE1 / TsaD family. Fe(2+) serves as cofactor.

Its subcellular location is the cytoplasm. It carries out the reaction L-threonylcarbamoyladenylate + adenosine(37) in tRNA = N(6)-L-threonylcarbamoyladenosine(37) in tRNA + AMP + H(+). Functionally, required for the formation of a threonylcarbamoyl group on adenosine at position 37 (t(6)A37) in tRNAs that read codons beginning with adenine. Is probably involved in the transfer of the threonylcarbamoyl moiety of threonylcarbamoyl-AMP (TC-AMP) to the N6 group of A37. This chain is tRNA N6-adenosine threonylcarbamoyltransferase, found in Caldivirga maquilingensis (strain ATCC 700844 / DSM 13496 / JCM 10307 / IC-167).